The primary structure comprises 282 residues: Protoheme IX farnesyltransferase (282 aa).

Transmembrane regions (helical) follow at residues 9-29, 39-59, 79-99, 102-122, 139-159, 165-185, 210-230, 231-251, and 261-281; these read LAKP…FLLA, LPLF…GCVF, LVTG…LLIL, LVLY…GFIV, VLGG…VVNI, LALF…IAML, IMLF…VLGS, ADLF…YKSI, and VFAK…CLTM.

The protein belongs to the UbiA prenyltransferase family. Protoheme IX farnesyltransferase subfamily.

It localises to the cell inner membrane. The enzyme catalyses heme b + (2E,6E)-farnesyl diphosphate + H2O = Fe(II)-heme o + diphosphate. The protein operates within porphyrin-containing compound metabolism; heme O biosynthesis; heme O from protoheme: step 1/1. Converts heme B (protoheme IX) to heme O by substitution of the vinyl group on carbon 2 of heme B porphyrin ring with a hydroxyethyl farnesyl side group. In Francisella tularensis subsp. holarctica (strain FTNF002-00 / FTA), this protein is Protoheme IX farnesyltransferase.